A 127-amino-acid polypeptide reads, in one-letter code: Large ribosomal subunit protein uL22 (127 aa).

Low complexity predominate over residues 106-117; it reads GAPEGVPVGGAV. Residues 106–127 are disordered; that stretch reads GAPEGVPVGGAVDTPGDEEEEE.

The protein belongs to the universal ribosomal protein uL22 family. Part of the 50S ribosomal subunit.

Functionally, this protein binds specifically to 23S rRNA; its binding is stimulated by other ribosomal proteins, e.g. L4, L17, and L20. It is important during the early stages of 50S assembly. It makes multiple contacts with different domains of the 23S rRNA in the assembled 50S subunit and ribosome. Its function is as follows. The globular domain of the protein is located near the polypeptide exit tunnel on the outside of the subunit, while an extended beta-hairpin is found that lines the wall of the exit tunnel in the center of the 70S ribosome. The polypeptide is Large ribosomal subunit protein uL22 (Rubrobacter xylanophilus (strain DSM 9941 / JCM 11954 / NBRC 16129 / PRD-1)).